Consider the following 120-residue polypeptide: Large ribosomal subunit protein eL18 (120 aa).

Belongs to the eukaryotic ribosomal protein eL18 family.

The sequence is that of Large ribosomal subunit protein eL18 from Pyrococcus abyssi (strain GE5 / Orsay).